Reading from the N-terminus, the 180-residue chain is tRNA-splicing endonuclease (180 aa).

Catalysis depends on residues tyrosine 117, histidine 125, and lysine 156.

This sequence belongs to the tRNA-intron endonuclease family. Archaeal short subfamily. Homotetramer; although the tetramer contains four active sites, only two participate in the cleavage. Therefore, it should be considered as a dimer of dimers.

The catalysed reaction is pretRNA = a 3'-half-tRNA molecule with a 5'-OH end + a 5'-half-tRNA molecule with a 2',3'-cyclic phosphate end + an intron with a 2',3'-cyclic phosphate and a 5'-hydroxyl terminus.. In terms of biological role, endonuclease that removes tRNA introns. Cleaves pre-tRNA at the 5'- and 3'-splice sites to release the intron. The products are an intron and two tRNA half-molecules bearing 2',3' cyclic phosphate and 5'-OH termini. Recognizes a pseudosymmetric substrate in which 2 bulged loops of 3 bases are separated by a stem of 4 bp. This Sulfurisphaera tokodaii (strain DSM 16993 / JCM 10545 / NBRC 100140 / 7) (Sulfolobus tokodaii) protein is tRNA-splicing endonuclease.